A 138-amino-acid chain; its full sequence is Nucleoside diphosphate kinase (138 aa).

Positions 10, 58, 86, 92, 103, and 113 each coordinate ATP. The Pros-phosphohistidine intermediate role is filled by His-116.

This sequence belongs to the NDK family. In terms of assembly, homotetramer. The cofactor is Mg(2+).

The protein resides in the cytoplasm. It catalyses the reaction a 2'-deoxyribonucleoside 5'-diphosphate + ATP = a 2'-deoxyribonucleoside 5'-triphosphate + ADP. It carries out the reaction a ribonucleoside 5'-diphosphate + ATP = a ribonucleoside 5'-triphosphate + ADP. In terms of biological role, major role in the synthesis of nucleoside triphosphates other than ATP. The ATP gamma phosphate is transferred to the NDP beta phosphate via a ping-pong mechanism, using a phosphorylated active-site intermediate. This is Nucleoside diphosphate kinase from Actinobacillus pleuropneumoniae serotype 5b (strain L20).